The primary structure comprises 2186 residues: Non-reducing polyketide synthase men2 (2186 aa).

A Starter acyltransferase (SAT) domain is found at 16–255 (FFGDQTVDAL…MQLPLGTPAH (240 aa)). The Ketosynthase family 3 (KS3) domain occupies 382–815 (SNLIAVVGQS…GGNNCVLLEE (434 aa)). Active-site for beta-ketoacyl synthase activity residues include cysteine 554, histidine 690, and histidine 729. The 291-residue stretch at 914–1204 (VFAFTGQGAQ…SSLVKSTLSA (291 aa)) folds into the Malonyl-CoA:ACP transacylase (MAT) domain. Positions 1299–1623 (TASLQQVRSE…TRRVLATVLG (325 aa)) are product template (PT) domain. Residues 1303–1434 (QQVRSEQING…CKLHFDKRGS (132 aa)) are N-terminal hotdog fold. The PKS/mFAS DH domain maps to 1303–1619 (QQVRSEQING…FQRLTRRVLA (317 aa)). Histidine 1335 functions as the Proton acceptor; for dehydratase activity in the catalytic mechanism. The C-terminal hotdog fold stretch occupies residues 1463-1619 (TGHRLPKSVV…FQRLTRRVLA (157 aa)). Residue aspartate 1523 is the Proton donor; for dehydratase activity of the active site. Positions 1666–1742 (VGDEKADAAI…GLRRAISELS (77 aa)) constitute a Carrier 1 domain. Residue serine 1702 is modified to O-(pantetheine 4'-phosphoryl)serine. The tract at residues 1747–1785 (GPASGSVSVSSSATTTHGMTTPSSTSSAQSSQSSQTPDG) is disordered. A compositionally biased stretch (low complexity) spans 1749–1783 (ASGSVSVSSSATTTHGMTTPSSTSSAQSSQSSQTP). The Carrier 2 domain maps to 1784–1861 (DGPGIYANAV…HVRRALGSDS (78 aa)). At serine 1821 the chain carries O-(pantetheine 4'-phosphoryl)serine. A disordered region spans residues 1857-1878 (LGSDSDGDSKPKSAPAPPAPEP). The tract at residues 1921-2163 (LFFLPDGTGY…TMPCDHLSLL (243 aa)) is thioesterase (TE) domain.

It depends on pantetheine 4'-phosphate as a cofactor.

It participates in secondary metabolite biosynthesis. Its function is as follows. Non-reducing polyketide synthase; part of the gene cluster that mediates the biosynthesis of menisporopsin A, a bioactive macrocyclic polylactone. The biosynthesis of menisporopsin A is performed by a reducing (man1) and a non-reducing (men2) polyketide synthase that catalyze the formation of each menisporopsin A subunits, while the esterification and cyclolactonization activities are probably peformed by the unusual thioesterase domain of men2. First, a reduced diketide intermediate, 3-hydroxybutyryl-S-ACP is produced by men1 and transferred to men2; this is followed by a second reduced diketide which is further elongated using 3 units of malonyl-coA to form a reduced pentaketide. The cyclization of this intermediate by the PT domain forms the second subunit, 2,4-dihydroxy-6-(2-hydroxy-n-propyl)benzoyl-S-ACP. The TE domain of men2 then esterifies the secondary hydroxyl group on the side chain of the second subunit with the acyl-TE of the first subunit to form the first ester intermediate. This process occurs iteratively to form a linear tetraester intermediate. The final subunit is formed by a similar process, except that an extra malonyl-CoA is required in an additional elongation step to form a reduced hexaketide intermediate, and the carbonyl group next to the secondary hydroxyl group is reduced by a trans-acting ketoreductase. Again, the PT domain catalyzes cyclization to form the largest subunit, 2,4-dihydroxy-6-(2,4-dihydroxy-n-pentyl) benzoyl-S-ACP. Then the linear pentaester intermediate is formed. In this step, if the intermediate transfer rate is slow, intra- molecular cyclization involving the secondary hydroxyl group of the pentaester intermediate may occur to form menisporopsin B. Alternatively, transfer of the pentaester intermediate to the TE domain would allow cyclolactonization to be catalyzed by the TE to form menisporopsin A. This chain is Non-reducing polyketide synthase men2, found in Menisporopsis theobromae.